The primary structure comprises 333 residues: MNGFGAAVVITGCGSATPAQFLSNEELSQIVETSDEWIKSRTGIGKRHLADRSVSLSQLAAQAAIKALEMAQVSPRDIDLILLATSTPDDLFGSAAQVQSQIGANRAIAFDLTAACSGFLVGLVTATQFIRTGTYRNVLVIGADVLSRWVDWNDRATCVLFGDGAGAVVCQANDTKDNILGFELHSDGSQNGSLNLAYEGEELPLKQGIRVQKGTYKPLRMNGREVYRFAVAKVPEVIEKALYRANLTTSDIDWLVLHQANQRIMDAVSERLKLPPEKVISNLSEYGNTSAASIPLALDEAVRSGKVKKGDIIASSGFGAGLTWGGIIFRWGD.

Catalysis depends on residues Cys116 and His258. Residues 259–263 (QANQR) form an ACP-binding region. Asn288 is a catalytic residue.

It belongs to the thiolase-like superfamily. FabH family. In terms of assembly, homodimer.

The protein resides in the cytoplasm. The catalysed reaction is malonyl-[ACP] + acetyl-CoA + H(+) = 3-oxobutanoyl-[ACP] + CO2 + CoA. It functions in the pathway lipid metabolism; fatty acid biosynthesis. Catalyzes the condensation reaction of fatty acid synthesis by the addition to an acyl acceptor of two carbons from malonyl-ACP. Catalyzes the first condensation reaction which initiates fatty acid synthesis and may therefore play a role in governing the total rate of fatty acid production. Possesses both acetoacetyl-ACP synthase and acetyl transacylase activities. Its substrate specificity determines the biosynthesis of branched-chain and/or straight-chain of fatty acids. In Microcystis aeruginosa (strain NIES-843 / IAM M-2473), this protein is Beta-ketoacyl-[acyl-carrier-protein] synthase III.